Here is a 159-residue protein sequence, read N- to C-terminus: Keratin-associated protein 9-3 (159 aa).

Tandem repeats lie at residues 8-12 (CCQPT), 13-17 (CCRTT), 32-36 (CCQPS), 37-41 (CCVSS), 46-50 (CCHPT), 51-55 (CCQNT), 56-60 (CCRTT), 61-65 (CCQPI), 70-74 (CCQPS), 75-79 (CCSTP), 80-84 (CCQPT), 85-89 (CCGSS), 129-133 (CCRPA), 134-138 (CCETT), 139-143 (CCRTT), and 153-157 (CCQPS). Residues 8-157 (CCQPTCCRTT…TCVYSCCQPS (150 aa)) form a 16 X 5 AA repeats of C-C-[RQVSHE]-[SPTN]-[TASPI] region.

It belongs to the KRTAP type 9 family. As to quaternary structure, interacts with hair keratins.

In terms of biological role, in the hair cortex, hair keratin intermediate filaments are embedded in an interfilamentous matrix, consisting of hair keratin-associated proteins (KRTAP), which are essential for the formation of a rigid and resistant hair shaft through their extensive disulfide bond cross-linking with abundant cysteine residues of hair keratins. The matrix proteins include the high-sulfur and high-glycine-tyrosine keratins. The sequence is that of Keratin-associated protein 9-3 (KRTAP9-3) from Homo sapiens (Human).